The sequence spans 259 residues: Putative protein-disulfide oxidoreductase RBE_1288 (259 aa).

The signal sequence occupies residues 1-20 (MRNSFITLIFLLLLSGCSEE). Residues 25–54 (VEQESSESITPAQASTSDENNNQTTETTTP) form a disordered region. The segment covering 33–42 (ITPAQASTSD) has biased composition (polar residues). The segment covering 43 to 54 (ENNNQTTETTTP) has biased composition (low complexity). The 205-residue stretch at 47 to 251 (QTTETTTPAV…ISAAIDKAIE (205 aa)) folds into the Thioredoxin domain. Residues cysteine 104 and cysteine 107 are joined by a disulfide bond.

This sequence belongs to the thioredoxin family. DsbA subfamily.

It is found in the periplasm. May be required for disulfide bond formation in some proteins. The sequence is that of Putative protein-disulfide oxidoreductase RBE_1288 from Rickettsia bellii (strain RML369-C).